We begin with the raw amino-acid sequence, 600 residues long: Probable tripeptidyl-peptidase SED4 (600 aa).

Positions 1-22 (MVSFTLRAIGACLIGLPALITA) are cleaved as a signal peptide. Positions 23-202 (APTSHVSNDF…SVFTSDLEIT (180 aa)) are cleaved as a propeptide — removed in mature form. N-linked (GlcNAc...) asparagine glycosylation is found at N210 and N281. In terms of domain architecture, Peptidase S53 spans 212–600 (TITPDCIREL…FEKLSKLVLI (389 aa)). Active-site charge relay system residues include E288 and D292. N-linked (GlcNAc...) asparagine glycosylation is found at N323 and N404. The active-site Charge relay system is the S504. Residues D546 and I547 each contribute to the Ca(2+) site. N575 is a glycosylation site (N-linked (GlcNAc...) asparagine). Positions 579 and 581 each coordinate Ca(2+).

Ca(2+) serves as cofactor.

The protein resides in the secreted. Its subcellular location is the extracellular space. The enzyme catalyses Release of an N-terminal tripeptide from a polypeptide.. In terms of biological role, secreted tripeptidyl-peptidase which degrades proteins at acidic pHs and is involved in virulence. The polypeptide is Probable tripeptidyl-peptidase SED4 (SED4) (Arthroderma benhamiae (strain ATCC MYA-4681 / CBS 112371) (Trichophyton mentagrophytes)).